The following is a 634-amino-acid chain: Chaperone protein DnaK (634 aa).

Thr197 carries the phosphothreonine; by autocatalysis modification. The tract at residues 592–634 is disordered; that stretch reads IGSSVYQQPGNQPPAPGGPNANASDDKGPDDDVIDADFTETKD. Over residues 619–634 the composition is skewed to acidic residues; the sequence is GPDDDVIDADFTETKD.

The protein belongs to the heat shock protein 70 family.

In terms of biological role, acts as a chaperone. This is Chaperone protein DnaK from Prochlorococcus marinus (strain MIT 9515).